Reading from the N-terminus, the 245-residue chain is Adenosylcobinamide-GDP ribazoletransferase (245 aa).

5 consecutive transmembrane segments (helical) span residues 31-51 (LLHYPAVGLFLGALLWLAALL), 57-77 (PLLQAALLLALWVALTGALHL), 109-129 (VAVVVLVIMLLLKFSALLVVL), 134-154 (PAALVLAPLLGRAALLALFLC), and 176-196 (ALMVLALVVIGCLLLGATGLL).

This sequence belongs to the CobS family. Mg(2+) serves as cofactor.

Its subcellular location is the cell inner membrane. The catalysed reaction is alpha-ribazole + adenosylcob(III)inamide-GDP = adenosylcob(III)alamin + GMP + H(+). It catalyses the reaction alpha-ribazole 5'-phosphate + adenosylcob(III)inamide-GDP = adenosylcob(III)alamin 5'-phosphate + GMP + H(+). It functions in the pathway cofactor biosynthesis; adenosylcobalamin biosynthesis; adenosylcobalamin from cob(II)yrinate a,c-diamide: step 7/7. Functionally, joins adenosylcobinamide-GDP and alpha-ribazole to generate adenosylcobalamin (Ado-cobalamin). Also synthesizes adenosylcobalamin 5'-phosphate from adenosylcobinamide-GDP and alpha-ribazole 5'-phosphate. The sequence is that of Adenosylcobinamide-GDP ribazoletransferase from Stutzerimonas stutzeri (strain A1501) (Pseudomonas stutzeri).